A 188-amino-acid polypeptide reads, in one-letter code: Transmembrane protein 160 (188 aa).

The transit peptide at 1-96 directs the protein to the mitochondrion; it reads MGGGWWWARA…ISFMQSDMGR (96 aa). A disordered region spans residues 25 to 52; it reads PPRPRSGGARGSFAPGHGPRAGASPPPV. Over residues 29–38 the composition is skewed to low complexity; the sequence is RSGGARGSFA. S48 is subject to Phosphoserine. The next 2 helical transmembrane spans lie at 102 to 122 and 135 to 155; these read FFLL…VGLA and AAAG…AVGL.

This sequence belongs to the TMEM160 family.

It localises to the mitochondrion inner membrane. The chain is Transmembrane protein 160 from Bos taurus (Bovine).